The sequence spans 1664 residues: DNA-directed RNA polymerase I subunit RPA190 (1664 aa).

Zn(2+) is bound by residues Cys-62, Cys-65, Cys-72, His-75, Cys-102, Cys-105, Cys-233, and Cys-236. The tract at residues 280 to 310 (QAKKLDGSNEASANDEESFDVGRNPTTRPKT) is disordered. Mg(2+) contacts are provided by Asp-627, Asp-629, and Asp-631. A Phosphoserine modification is found at Ser-889. The interval 992 to 1004 (PQEYYFHCMAGRE) is bridging helix. Positions 1343-1423 (DIGVAVPRLQ…DSDSEDEDVD (81 aa)) are disordered. The segment covering 1393 to 1414 (ETMREAEKSSDEEGIDSDKESD) has biased composition (basic and acidic residues). Phosphoserine is present on Ser-1636.

It belongs to the RNA polymerase beta' chain family. As to quaternary structure, component of the RNA polymerase I (Pol I) complex consisting of 14 subunits: RPA135, RPA190, RPC40, RPA14, RPB5, RPO26, RPA43, RPB8, RPA12, RPB10, RPC19, RPC10, RPA49 and RPA34. The complex is composed of a horseshoe-shaped core containing ten subunits (RPA135, RPA190, RPB5, RPO26, RPB8, RPB10, RPC10, RPA12, RPC19 and RPC40) where RPA135 and RPA190 form the DNA-binding cleft. Outside of the core, RPA14 and RPA43 form the stalk that mediates interactions with transcription initiation factors and newly synthesized RNA.

The protein localises to the nucleus. The protein resides in the nucleolus. The catalysed reaction is RNA(n) + a ribonucleoside 5'-triphosphate = RNA(n+1) + diphosphate. DNA-dependent RNA polymerases catalyze the transcription of DNA into RNA using the four ribonucleoside triphosphates as substrates. Component of RNA polymerase I (Pol I) which synthesizes ribosomal RNA precursors. Besides, RNA polymerase I has intrinsic RNA cleavage activity. RPA190 and RPA135 both contribute to the polymerase catalytic activity and together form the Pol I active center. In addition, subunit RPA12 contributes a catalytic zinc ribbon that is required for RNA cleavage by Pol I. A single stranded DNA template strand of the promoter is positioned within the central active site cleft of Pol I. A bridging helix emanates from RPA190 and crosses the cleft near the catalytic site and is thought to promote translocation of Pol I by acting as a ratchet that moves the RNA-DNA hybrid through the active site by switching from straight to bent conformations at each step of nucleotide addition. In Saccharomyces cerevisiae (strain ATCC 204508 / S288c) (Baker's yeast), this protein is DNA-directed RNA polymerase I subunit RPA190 (RPA190).